Here is a 203-residue protein sequence, read N- to C-terminus: Protein GrpE 2 (203 aa).

The segment covering 1–12 (MPTRPQEPDRAA) has biased composition (basic and acidic residues). Positions 1-64 (MPTRPQEPDR…APAEDEYTTA (64 aa)) are disordered. Low complexity predominate over residues 45-56 (GEPGPDAAGPAP).

Belongs to the GrpE family. In terms of assembly, homodimer.

The protein localises to the cytoplasm. Functionally, participates actively in the response to hyperosmotic and heat shock by preventing the aggregation of stress-denatured proteins, in association with DnaK and GrpE. It is the nucleotide exchange factor for DnaK and may function as a thermosensor. Unfolded proteins bind initially to DnaJ; upon interaction with the DnaJ-bound protein, DnaK hydrolyzes its bound ATP, resulting in the formation of a stable complex. GrpE releases ADP from DnaK; ATP binding to DnaK triggers the release of the substrate protein, thus completing the reaction cycle. Several rounds of ATP-dependent interactions between DnaJ, DnaK and GrpE are required for fully efficient folding. In Streptomyces avermitilis (strain ATCC 31267 / DSM 46492 / JCM 5070 / NBRC 14893 / NCIMB 12804 / NRRL 8165 / MA-4680), this protein is Protein GrpE 2.